We begin with the raw amino-acid sequence, 541 residues long: ATP synthase subunit beta (541 aa).

The interval 1–65 (MAKAVTSSKG…TPVKKEERAK (65 aa)) is disordered. Composition is skewed to basic and acidic residues over residues 25-36 (VKKDASKSKDAS) and 52-65 (AAKDTPVKKEERAK). ATP is bound at residue 214-221 (GGAGVGKT).

Belongs to the ATPase alpha/beta chains family. In terms of assembly, F-type ATPases have 2 components, CF(1) - the catalytic core - and CF(0) - the membrane proton channel. CF(1) has five subunits: alpha(3), beta(3), gamma(1), delta(1), epsilon(1). CF(0) has three main subunits: a(1), b(2) and c(9-12). The alpha and beta chains form an alternating ring which encloses part of the gamma chain. CF(1) is attached to CF(0) by a central stalk formed by the gamma and epsilon chains, while a peripheral stalk is formed by the delta and b chains.

It localises to the cell inner membrane. The enzyme catalyses ATP + H2O + 4 H(+)(in) = ADP + phosphate + 5 H(+)(out). Functionally, produces ATP from ADP in the presence of a proton gradient across the membrane. The catalytic sites are hosted primarily by the beta subunits. This is ATP synthase subunit beta from Bartonella tribocorum (strain CIP 105476 / IBS 506).